The primary structure comprises 481 residues: Glutamate--tRNA ligase (481 aa).

The 'HIGH' region signature appears at 10-20; sequence PSPTGHLHIGN. The short motif at 251–255 is the 'KMSKS' region element; sequence KLSKR. Lys254 serves as a coordination point for ATP.

The protein belongs to the class-I aminoacyl-tRNA synthetase family. Glutamate--tRNA ligase type 1 subfamily. In terms of assembly, monomer.

Its subcellular location is the cytoplasm. The catalysed reaction is tRNA(Glu) + L-glutamate + ATP = L-glutamyl-tRNA(Glu) + AMP + diphosphate. In terms of biological role, catalyzes the attachment of glutamate to tRNA(Glu) in a two-step reaction: glutamate is first activated by ATP to form Glu-AMP and then transferred to the acceptor end of tRNA(Glu). This is Glutamate--tRNA ligase from Exiguobacterium sibiricum (strain DSM 17290 / CCUG 55495 / CIP 109462 / JCM 13490 / 255-15).